We begin with the raw amino-acid sequence, 138 residues long: Putative pre-16S rRNA nuclease (138 aa).

This sequence belongs to the YqgF nuclease family.

It is found in the cytoplasm. Its function is as follows. Could be a nuclease involved in processing of the 5'-end of pre-16S rRNA. This chain is Putative pre-16S rRNA nuclease, found in Listeria innocua serovar 6a (strain ATCC BAA-680 / CLIP 11262).